The primary structure comprises 205 residues: 2-dehydro-3-deoxy-6-phosphogalactonate aldolase (205 aa).

Residue Arg-14 participates in 2-dehydro-3-deoxy-6-phospho-D-galactonate binding. Catalysis depends on Glu-37, which acts as the Proton donor/acceptor. Residues Thr-66, Lys-126, Gly-156, Gly-176, and Ser-177 each contribute to the 2-dehydro-3-deoxy-6-phospho-D-galactonate site. Lys-126 serves as the catalytic Schiff-base intermediate with substrate.

The protein belongs to the KHG/KDPG aldolase family. As to quaternary structure, homotrimer.

It catalyses the reaction 2-dehydro-3-deoxy-6-phospho-D-galactonate = D-glyceraldehyde 3-phosphate + pyruvate. It functions in the pathway carbohydrate acid metabolism; D-galactonate degradation; D-glyceraldehyde 3-phosphate and pyruvate from D-galactonate: step 3/3. In terms of biological role, involved in the degradation of galactose via the DeLey-Doudoroff pathway. Catalyzes the reversible, stereospecific retro-aldol cleavage of 2-keto-3-deoxy-6-phosphogalactonate (KDPGal) to pyruvate and D-glyceraldehyde-3-phosphate. In the synthetic direction, it catalyzes the addition of pyruvate to electrophilic aldehydes with re-facial selectivity. It can use a limited number of aldehyde substrates, including D-glyceraldehyde-3-phosphate (natural substrate), D-glyceraldehyde, glycolaldehyde, 2-pyridinecarboxaldehyde, D-ribose, D-erythrose and D-threose. It efficiently catalyzes aldol addition only using pyruvate as the nucleophilic component and accepts both stereochemical configurations at C2 of the electrophile. The chain is 2-dehydro-3-deoxy-6-phosphogalactonate aldolase (dgoA) from Escherichia coli (strain K12).